A 126-amino-acid chain; its full sequence is Aspartate 1-decarboxylase (126 aa).

Catalysis depends on Ser-25, which acts as the Schiff-base intermediate with substrate; via pyruvic acid. Position 25 is a pyruvic acid (Ser) (Ser-25). Residue Thr-57 participates in substrate binding. Tyr-58 (proton donor) is an active-site residue. 73 to 75 is a binding site for substrate; sequence GAA.

Belongs to the PanD family. In terms of assembly, heterooctamer of four alpha and four beta subunits. Pyruvate serves as cofactor. Is synthesized initially as an inactive proenzyme, which is activated by self-cleavage at a specific serine bond to produce a beta-subunit with a hydroxyl group at its C-terminus and an alpha-subunit with a pyruvoyl group at its N-terminus.

The protein resides in the cytoplasm. The enzyme catalyses L-aspartate + H(+) = beta-alanine + CO2. The protein operates within cofactor biosynthesis; (R)-pantothenate biosynthesis; beta-alanine from L-aspartate: step 1/1. Its function is as follows. Catalyzes the pyruvoyl-dependent decarboxylation of aspartate to produce beta-alanine. In Chromohalobacter salexigens (strain ATCC BAA-138 / DSM 3043 / CIP 106854 / NCIMB 13768 / 1H11), this protein is Aspartate 1-decarboxylase.